Here is a 30-residue protein sequence, read N- to C-terminus: Hainantoxin F7-28.42 (30 aa).

Expressed by the venom gland.

The protein localises to the secreted. In Cyriopagopus hainanus (Chinese bird spider), this protein is Hainantoxin F7-28.42.